A 233-amino-acid chain; its full sequence is Protein Atu3128 (233 aa).

The protein belongs to the glycosyl hydrolase 88 family.

Seems to regulate the surface properties of the bacterium in the presence of plant cells or plant cell extracts. Mutations in this protein are responsible for an increased aggregation of the bacteria in the presence of pea root cap cells. The chain is Protein Atu3128 from Agrobacterium fabrum (strain C58 / ATCC 33970) (Agrobacterium tumefaciens (strain C58)).